The sequence spans 294 residues: Zinc finger protein CONSTANS-LIKE 3 (294 aa).

8 residues coordinate Zn(2+): cysteine 8, cysteine 11, cysteine 31, histidine 36, cysteine 51, cysteine 54, cysteine 74, and histidine 79. The segment at 8–50 (CDSCKSTAATLFCRADAAFLCGDCDGKIHTANKLASRHERVWL) adopts a B box-type 1; atypical zinc-finger fold. Residues 51–93 (CEVCEQAPAHVTCKADAAALCVTCDRDIHSANPLSRRHERVPI) form a B box-type 2; atypical zinc finger. A CCT domain is found at 229 to 271 (REARVLRYREKRKNRKFEKTIRYASRKAYAEMRPRIKGRFAKR).

Belongs to the CONSTANS family.

It is found in the nucleus. This Arabidopsis thaliana (Mouse-ear cress) protein is Zinc finger protein CONSTANS-LIKE 3 (COL3).